Here is a 429-residue protein sequence, read N- to C-terminus: Glutamate-1-semialdehyde 2,1-aminomutase 2 (429 aa).

K268 carries the post-translational modification N6-(pyridoxal phosphate)lysine.

This sequence belongs to the class-III pyridoxal-phosphate-dependent aminotransferase family. HemL subfamily. Homodimer. The cofactor is pyridoxal 5'-phosphate.

Its subcellular location is the cytoplasm. The catalysed reaction is (S)-4-amino-5-oxopentanoate = 5-aminolevulinate. The protein operates within porphyrin-containing compound metabolism; protoporphyrin-IX biosynthesis; 5-aminolevulinate from L-glutamyl-tRNA(Glu): step 2/2. The polypeptide is Glutamate-1-semialdehyde 2,1-aminomutase 2 (Bacillus thuringiensis (strain Al Hakam)).